We begin with the raw amino-acid sequence, 324 residues long: Fructose-1,6-bisphosphatase class 1 (324 aa).

4 residues coordinate Mg(2+): E88, D107, L109, and D110. Substrate is bound by residues 110–113 (DGSS), N199, and K265. E271 contributes to the Mg(2+) binding site.

It belongs to the FBPase class 1 family. As to quaternary structure, homotetramer. Requires Mg(2+) as cofactor.

It is found in the cytoplasm. It catalyses the reaction beta-D-fructose 1,6-bisphosphate + H2O = beta-D-fructose 6-phosphate + phosphate. It functions in the pathway carbohydrate biosynthesis; gluconeogenesis. The polypeptide is Fructose-1,6-bisphosphatase class 1 (Neisseria meningitidis serogroup B (strain ATCC BAA-335 / MC58)).